Consider the following 76-residue polypeptide: Probable small nuclear ribonucleoprotein G (76 aa).

The Sm domain maps to 4-76 (AHPPEVKKYM…IVMVEALDRV (73 aa)).

The protein belongs to the snRNP Sm proteins family. As to quaternary structure, interacts with the SMN complex. Core component of the spliceosomal U1, U2, U4 and U5 small nuclear ribonucleoproteins (snRNPs), the building blocks of the spliceosome. Most spliceosomal snRNPs contain a common set of Sm proteins, SNRPB, SNRPD1, SNRPD2, SNRPD3, SNRPE, SNRPF and SNRPG that assemble in a heptameric protein ring on the Sm site of the small nuclear RNA to form the core snRNP. Component of the U1 snRNP. Component of the U4/U6-U5 tri-snRNP complex. Component of the U7 snRNP complex. Component of the U11/U12 snRNPs that are part of the U12-type spliceosome.

It is found in the cytoplasm. The protein localises to the cytosol. Its subcellular location is the nucleus. Its function is as follows. Plays a role in pre-mRNA splicing as a core component of the spliceosomal U1, U2, U4 and U5 small nuclear ribonucleoproteins (snRNPs), the building blocks of the spliceosome. Component of both the pre-catalytic spliceosome B complex and activated spliceosome C complexes. Is also a component of the minor U12 spliceosome. The chain is Probable small nuclear ribonucleoprotein G from Drosophila melanogaster (Fruit fly).